The chain runs to 224 residues: Ribonuclease 3 (224 aa).

The 123-residue stretch at 5–127 (ANRLQRRLGY…IIGAIYLDSD (123 aa)) folds into the RNase III domain. Position 40 (Glu-40) interacts with Mg(2+). Asp-44 is a catalytic residue. Positions 113 and 116 each coordinate Mg(2+). Residue Glu-116 is part of the active site. The DRBM domain maps to 154 to 224 (DPKTRLQECL…AELALKQLES (71 aa)).

Belongs to the ribonuclease III family. In terms of assembly, homodimer. Mg(2+) is required as a cofactor.

It is found in the cytoplasm. The catalysed reaction is Endonucleolytic cleavage to 5'-phosphomonoester.. Functionally, digests double-stranded RNA. Involved in the processing of primary rRNA transcript to yield the immediate precursors to the large and small rRNAs (23S and 16S). Processes some mRNAs, and tRNAs when they are encoded in the rRNA operon. Processes pre-crRNA and tracrRNA of type II CRISPR loci if present in the organism. The sequence is that of Ribonuclease 3 from Photobacterium profundum (strain SS9).